Here is a 303-residue protein sequence, read N- to C-terminus: Elongation factor Ts (303 aa).

The tract at residues 81 to 84 is involved in Mg(2+) ion dislocation from EF-Tu; it reads TDFV.

This sequence belongs to the EF-Ts family.

The protein resides in the cytoplasm. In terms of biological role, associates with the EF-Tu.GDP complex and induces the exchange of GDP to GTP. It remains bound to the aminoacyl-tRNA.EF-Tu.GTP complex up to the GTP hydrolysis stage on the ribosome. This is Elongation factor Ts from Mesomycoplasma hyopneumoniae (strain 7448) (Mycoplasma hyopneumoniae).